Reading from the N-terminus, the 734-residue chain is Platelet glycoprotein Ib alpha chain (734 aa).

The N-terminal stretch at 1–16 (MALLILLFLLPSPLHS) is a signal peptide. Residues 17–47 (QHTCSISKVTSLLEVNCENKKLTALPADLPA) enclose the LRRNT domain. Residues 17-612 (QHTCSISKVT…LNSDFCCFLP (596 aa)) lie on the Extracellular side of the membrane. A disulfide bridge connects residues cysteine 20 and cysteine 33. 7 LRR repeats span residues 48-69 (DTGILHLGENQLGTFSTASLVH), 72-93 (HLTYLYLDRCELTSLQTNGKLI), 94-115 (KLENLDLSHNNLKSLPSLGWAL), 117-140 (ALTTLDVSFNKLGSLSPGVLDGLS), 141-162 (QLQELYLQNNDLKSLPPGLLLP), 165-188 (KLKKLNLANNKLRELPSGLLDGLE), and 189-210 (DLDTLYLQRNWLRTIPKGFFGT). The 62-residue stretch at 221–282 (NSWYCDCEIL…YSYPGKGCPT (62 aa)) folds into the LRRCT domain. 2 disulfide bridges follow: cysteine 225–cysteine 264 and cysteine 227–cysteine 280. Tyrosine 292 bears the Sulfotyrosine mark. 4 O-linked (GalNAc...) threonine glycosylation sites follow: threonine 301, threonine 311, threonine 315, and threonine 316. O-linked (GalNAc...) serine glycosylation occurs at serine 335. 4 O-linked (GalNAc...) threonine glycosylation sites follow: threonine 339, threonine 348, threonine 358, and threonine 377. O-linked (GalNAc...) serine glycosylation is present at serine 382. 3 O-linked (GalNAc...) threonine glycosylation sites follow: threonine 384, threonine 385, and threonine 405. Disordered regions lie at residues 406–429 (STLTTPEHSTTPVPTTTILTTPEH) and 460–526 (EPST…PEPS). O-linked (GalNAc...) threonine glycosylation is found at threonine 512, threonine 516, threonine 519, threonine 530, threonine 542, threonine 546, threonine 550, and threonine 562. A glycan (O-linked (GalNAc...) serine) is linked at serine 572. Threonine 573 carries O-linked (GalNAc...) threonine glycosylation. The helical transmembrane segment at 613–633 (LGFYVLGLLWLLFASVVLILL) threads the bilayer. Over 634-734 (LTWTWHVTPH…VGIRYSGHSL (101 aa)) the chain is Cytoplasmic. Residues serine 711 and serine 714 each carry the phosphoserine modification.

In terms of assembly, two GP-Ib beta are disulfide-linked to one GP-Ib alpha. GP-IX is complexed with the GP-Ib heterodimer via a non covalent linkage. Interacts with FLNB. Interacts with FLNA (via filamin repeats 4, 9, 12, 17, 19, 21, and 23). Post-translationally, O-glycosylated. In terms of processing, glycocalicin is the product of a proteolytic cleavage/shedding, catalyzed by ADAM17, which releases most of the extracellular domain. Binding sites for vWF and thrombin are in this part of the protein.

The protein resides in the membrane. Its function is as follows. GP-Ib, a surface membrane protein of platelets, participates in the formation of platelet plugs by binding to the A1 domain of vWF, which is already bound to the subendothelium. In Mus musculus (Mouse), this protein is Platelet glycoprotein Ib alpha chain (Gp1ba).